A 365-amino-acid chain; its full sequence is S-adenosylmethionine:tRNA ribosyltransferase-isomerase (365 aa).

It belongs to the QueA family. In terms of assembly, monomer.

Its subcellular location is the cytoplasm. The enzyme catalyses 7-aminomethyl-7-carbaguanosine(34) in tRNA + S-adenosyl-L-methionine = epoxyqueuosine(34) in tRNA + adenine + L-methionine + 2 H(+). It functions in the pathway tRNA modification; tRNA-queuosine biosynthesis. Functionally, transfers and isomerizes the ribose moiety from AdoMet to the 7-aminomethyl group of 7-deazaguanine (preQ1-tRNA) to give epoxyqueuosine (oQ-tRNA). This Rickettsia conorii (strain ATCC VR-613 / Malish 7) protein is S-adenosylmethionine:tRNA ribosyltransferase-isomerase.